A 424-amino-acid polypeptide reads, in one-letter code: Enolase (424 aa).

Glutamine 165 contacts (2R)-2-phosphoglycerate. Glutamate 207 serves as the catalytic Proton donor. Aspartate 244, glutamate 283, and aspartate 310 together coordinate Mg(2+). The (2R)-2-phosphoglycerate site is built by lysine 335, arginine 364, serine 365, and lysine 386. The active-site Proton acceptor is the lysine 335.

Belongs to the enolase family. It depends on Mg(2+) as a cofactor.

It is found in the cytoplasm. Its subcellular location is the secreted. It localises to the cell surface. The catalysed reaction is (2R)-2-phosphoglycerate = phosphoenolpyruvate + H2O. It participates in carbohydrate degradation; glycolysis; pyruvate from D-glyceraldehyde 3-phosphate: step 4/5. Catalyzes the reversible conversion of 2-phosphoglycerate (2-PG) into phosphoenolpyruvate (PEP). It is essential for the degradation of carbohydrates via glycolysis. This is Enolase from Chlamydia felis (strain Fe/C-56) (Chlamydophila felis).